The sequence spans 101 residues: NAD(P)H-quinone oxidoreductase subunit 4L, chloroplastic (101 aa).

Transmembrane regions (helical) follow at residues methionine 2 to isoleucine 22, methionine 32 to phenylalanine 52, and isoleucine 61 to valine 81.

Belongs to the complex I subunit 4L family. In terms of assembly, NDH is composed of at least 16 different subunits, 5 of which are encoded in the nucleus.

It is found in the plastid. The protein localises to the chloroplast thylakoid membrane. The catalysed reaction is a plastoquinone + NADH + (n+1) H(+)(in) = a plastoquinol + NAD(+) + n H(+)(out). It carries out the reaction a plastoquinone + NADPH + (n+1) H(+)(in) = a plastoquinol + NADP(+) + n H(+)(out). Functionally, NDH shuttles electrons from NAD(P)H:plastoquinone, via FMN and iron-sulfur (Fe-S) centers, to quinones in the photosynthetic chain and possibly in a chloroplast respiratory chain. The immediate electron acceptor for the enzyme in this species is believed to be plastoquinone. Couples the redox reaction to proton translocation, and thus conserves the redox energy in a proton gradient. In Chloranthus spicatus (Chulantree), this protein is NAD(P)H-quinone oxidoreductase subunit 4L, chloroplastic.